The sequence spans 876 residues: MSKSTAEIRQAFLDFFHSKGHQVVASSSLVPHNDPTLLFTNAGMNQFKDVFLGLDKRNYSRATTSQRCVRAGGKHNDLENVGYTARHHTFFEMLGNFSFGDYFKHDAIQFAWELLTSEKWFALPKERLWVTVYESDDEAYEIWEKEVGIPRERIIRIGDNKGAPYASDNFWQMGDTGPCGPCTEIFYDHGDHIWGGPPGSPEEDGDRYIEIWNIVFMQFNRQADGTMEPLPKPSVDTGMGLERIAAVLQHVNSNYDIDLFRTLIQAVAKVTGATDLSNKSLRVIADHIRSCAFLIADGVMPSNENRGYVLRRIIRRAVRHGNMLGAKETFFYKLVGPLIDVMGSAGEDLKRQQAQVEQVLKTEEEQFARTLERGLALLDEELAKLSGDTLDGETAFRLYDTYGFPVDLTADVCRERNIKVDEAGFEAAMEEQRRRAREASGFGADYNAMIRVDSASEFKGYDHLELNGKVTALFVDGKAVDAINAGQEAVVVLDQTPFYAESGGQVGDKGELKGANFSFAVEDTQKYGQAIGHIGKLAAGSLKVGDAVQADVDEARRARIRLNHSATHLMHAALRQVLGTHVSQKGSLVNDKVLRFDFSHNEAMKPEEIRAVEDLVNAQIRRNLPIETNIMDLEAAKAKGAMALFGEKYDERVRVLSMGDFSTELCGGTHASRTGDIGLFRIISESGTAAGVRRIEAVTGEGAITTVHADSDRLSEVAHLLKGDSNNLADKVRSVLERTRQLEKELQQLKEQAAAQESANLSSKAIDVNGVKLLVSELSGVEPKMLRTMVDDLKNQLGSTIIVLATVAEGKVSLIAGVSKDVTDRVKAGELIGMVAQQVGGKGGGRPDMAQAGGTDAAALPAALASVKGWVSAKLQ.

Residue Lys74 is modified to N6-acetyllysine. The Zn(2+) site is built by His564, His568, Cys666, and His670.

It belongs to the class-II aminoacyl-tRNA synthetase family. Homotetramer. Requires Zn(2+) as cofactor.

It localises to the cytoplasm. The enzyme catalyses tRNA(Ala) + L-alanine + ATP = L-alanyl-tRNA(Ala) + AMP + diphosphate. Functionally, catalyzes the attachment of alanine to tRNA(Ala) in a two-step reaction: alanine is first activated by ATP to form Ala-AMP and then transferred to the acceptor end of tRNA(Ala). Also edits incorrectly charged Ser-tRNA(Ala) and Gly-tRNA(Ala) via its editing domain. The chain is Alanine--tRNA ligase from Shigella sonnei (strain Ss046).